The chain runs to 419 residues: Tubby-like protein 4 (419 aa).

The tract at residues 1–96 (MAATKREPLR…EREEEEEGSS (96 aa)) is disordered. A compositionally biased stretch (basic and acidic residues) spans 33–57 (AKEKEKENEVPTEIGRGKDGGEKKP).

Belongs to the TUB family.

The polypeptide is Tubby-like protein 4 (TULP4) (Oryza sativa subsp. japonica (Rice)).